A 333-amino-acid polypeptide reads, in one-letter code: Type II restriction enzyme XcyI (333 aa).

This sequence belongs to the XcyI type II restriction endonuclease family. Monomer. The cofactor is Mg(2+).

It carries out the reaction Endonucleolytic cleavage of DNA to give specific double-stranded fragments with terminal 5'-phosphates.. Its function is as follows. A P subtype restriction enzyme that recognizes the double-stranded sequence 5'-CCCGGG-3' and cleaves after C-1. This chain is Type II restriction enzyme XcyI (xcyIR), found in Xanthomonas campestris pv. cyanopsidis.